The primary structure comprises 310 residues: Protease HtpX homolog (310 aa).

2 helical membrane passes run 16-36 (NAVL…VDAI) and 55-75 (IFPT…LVCI). Position 166 (histidine 166) interacts with Zn(2+). Glutamate 167 is an active-site residue. Position 170 (histidine 170) interacts with Zn(2+). 2 helical membrane-spanning segments follow: residues 182 to 202 (VGIL…FFMG) and 214 to 234 (MILW…QMYL). A Zn(2+)-binding site is contributed by glutamate 239.

The protein belongs to the peptidase M48B family. The cofactor is Zn(2+).

The protein resides in the cell inner membrane. The chain is Protease HtpX homolog from Helicobacter pylori (strain J99 / ATCC 700824) (Campylobacter pylori J99).